The following is a 957-amino-acid chain: Glycine dehydrogenase (decarboxylating) (957 aa).

Lys708 bears the N6-(pyridoxal phosphate)lysine mark.

Belongs to the GcvP family. In terms of assembly, the glycine cleavage system is composed of four proteins: P, T, L and H. Requires pyridoxal 5'-phosphate as cofactor.

The catalysed reaction is N(6)-[(R)-lipoyl]-L-lysyl-[glycine-cleavage complex H protein] + glycine + H(+) = N(6)-[(R)-S(8)-aminomethyldihydrolipoyl]-L-lysyl-[glycine-cleavage complex H protein] + CO2. Functionally, the glycine cleavage system catalyzes the degradation of glycine. The P protein binds the alpha-amino group of glycine through its pyridoxal phosphate cofactor; CO(2) is released and the remaining methylamine moiety is then transferred to the lipoamide cofactor of the H protein. This is Glycine dehydrogenase (decarboxylating) from Salmonella arizonae (strain ATCC BAA-731 / CDC346-86 / RSK2980).